Consider the following 194-residue polypeptide: Small ribosomal subunit protein uS4c (194 aa).

The 62-residue stretch at 82–143 (MRLDNILFRL…KERSKVLIQN (62 aa)) folds into the S4 RNA-binding domain.

Belongs to the universal ribosomal protein uS4 family. As to quaternary structure, part of the 30S ribosomal subunit. Contacts protein S5. The interaction surface between S4 and S5 is involved in control of translational fidelity.

Its subcellular location is the plastid. The protein resides in the chloroplast. In terms of biological role, one of the primary rRNA binding proteins, it binds directly to 16S rRNA where it nucleates assembly of the body of the 30S subunit. With S5 and S12 plays an important role in translational accuracy. This is Small ribosomal subunit protein uS4c (rps4) from Trimezia steyermarkii (Steyermark's trimezia).